The sequence spans 171 residues: Ribosome maturation factor RimP (171 aa).

The protein belongs to the RimP family.

It localises to the cytoplasm. Required for maturation of 30S ribosomal subunits. The sequence is that of Ribosome maturation factor RimP from Anaeromyxobacter dehalogenans (strain 2CP-1 / ATCC BAA-258).